Here is a 155-residue protein sequence, read N- to C-terminus: Riboflavin synthase (155 aa).

Belongs to the DMRL synthase family.

The enzyme catalyses 2 6,7-dimethyl-8-(1-D-ribityl)lumazine + H(+) = 5-amino-6-(D-ribitylamino)uracil + riboflavin. It participates in cofactor biosynthesis; riboflavin biosynthesis; riboflavin from 2-hydroxy-3-oxobutyl phosphate and 5-amino-6-(D-ribitylamino)uracil: step 2/2. This Aeropyrum pernix (strain ATCC 700893 / DSM 11879 / JCM 9820 / NBRC 100138 / K1) protein is Riboflavin synthase (ribC).